A 492-amino-acid polypeptide reads, in one-letter code: Glutamyl-tRNA(Gln) amidotransferase subunit A (492 aa).

Catalysis depends on charge relay system residues Lys78 and Ser158. Ser182 serves as the catalytic Acyl-ester intermediate.

The protein belongs to the amidase family. GatA subfamily. Heterotrimer of A, B and C subunits.

It catalyses the reaction L-glutamyl-tRNA(Gln) + L-glutamine + ATP + H2O = L-glutaminyl-tRNA(Gln) + L-glutamate + ADP + phosphate + H(+). Its function is as follows. Allows the formation of correctly charged Gln-tRNA(Gln) through the transamidation of misacylated Glu-tRNA(Gln) in organisms which lack glutaminyl-tRNA synthetase. The reaction takes place in the presence of glutamine and ATP through an activated gamma-phospho-Glu-tRNA(Gln). The chain is Glutamyl-tRNA(Gln) amidotransferase subunit A from Rhodopseudomonas palustris (strain BisB18).